We begin with the raw amino-acid sequence, 937 residues long: MORC family CW-type zinc finger protein 4 (937 aa).

The segment at 420 to 472 adopts a CW-type zinc-finger fold; it reads KVPDQTWVQCDECLKWRKLPGKIDPSMLPARWFCYYNSHPKYRRCSVPEEQEL. 4 residues coordinate Zn(2+): cysteine 429, cysteine 432, cysteine 453, and cysteine 464. Positions 606 to 637 are disordered; the sequence is PEGENSHDKSSSERSTPPYLFPEYPEASKNTG. The stretch at 762 to 876 forms a coiled coil; the sequence is KLKNQRELEE…LEMLQKAQVS (115 aa).

Expressed at low levels in normal tissues, with highest expression levels in placenta and testis. Expression is significantly increased in subset of diffuse large B-cell lymphomas.

The protein resides in the nucleus. Its function is as follows. Histone methylation reader which binds to non-methylated (H3K4me0), monomethylated (H3K4me1), dimethylated (H3K4me2) and trimethylated (H3K4me3) 'Lys-4' on histone H3. The order of binding preference is H3K4me3 &gt; H3K4me2 &gt; H3K4me1 &gt; H3K4me0. The protein is MORC family CW-type zinc finger protein 4 (MORC4) of Homo sapiens (Human).